The primary structure comprises 587 residues: Branchpoint-bridging protein (587 aa).

Over residues Met-1 to Pro-16 the composition is skewed to polar residues. 2 disordered regions span residues Met-1–Gly-64 and Gly-121–Gly-142. Residues Asp-44–Gly-64 show a composition bias toward basic and acidic residues. Phosphoserine occurs at positions 131 and 133. The 81-residue stretch at Tyr-191 to Ile-271 folds into the KH domain. CCHC-type zinc fingers lie at residues Gln-309–Glu-326 and Ile-334–Val-351. Disordered regions lie at residues Gly-375–Ser-490 and Ile-551–Arg-587. The span at Ala-379–Ala-399 shows a compositional bias: polar residues. Low complexity predominate over residues Ala-410–Ser-454. 2 stretches are compositionally biased toward polar residues: residues Gln-465 to Ala-483 and Ser-563 to Asn-573.

It belongs to the BBP/SF1 family. In terms of assembly, U2AF large subunit (u2af59), U2AF small subunit (u2af23) and bpb1 interact to form a complex required for complex A formation.

Its subcellular location is the cytoplasm. The protein localises to the nucleus. Functionally, necessary for the splicing of pre-mRNA. The BPB1(SF1)-u2af59-u2af23 complex has a role in the recognition of the branch site (5'-UACUAAC-3'), the pyrimidine tract and the 3'-splice site at the 3'-end of introns. This Schizosaccharomyces pombe (strain 972 / ATCC 24843) (Fission yeast) protein is Branchpoint-bridging protein (bpb1).